Reading from the N-terminus, the 241-residue chain is Fatty acid metabolism regulator protein (241 aa).

In terms of domain architecture, HTH gntR-type spans 11–79 (QSPAALAEEY…HGKPTKVNNI (69 aa)). Positions 39-58 (ERDLADKIGVTRTTLREVLQ) form a DNA-binding region, H-T-H motif.

In terms of assembly, homodimer.

It localises to the cytoplasm. Functionally, multifunctional regulator of fatty acid metabolism. In Haemophilus influenzae (strain ATCC 51907 / DSM 11121 / KW20 / Rd), this protein is Fatty acid metabolism regulator protein.